A 237-amino-acid polypeptide reads, in one-letter code: uncharacterized protein (237 aa).

21–28 provides a ligand contact to ATP; it reads GCDGSGKS.

It to E.coli YghR and YghT.

This is an uncharacterized protein from Escherichia coli (strain K12).